The following is a 144-amino-acid chain: Monooxygenase ptaG (144 aa).

The protein belongs to the avfA family.

It functions in the pathway secondary metabolite biosynthesis. In terms of biological role, monooxygenase; part of the gene cluster that mediates the biosynthesis of pestheic acid, a diphenyl ether which is a biosynthetic precursor of the unique chloropupukeananes. The biosynthesis initiates from condensation of acetate and malonate units catalyzed by the non-reducing PKS ptaA. As the ptaA protein is TE/CLC domain-deficient, hydrolysis and Claisen cyclization of the polyketide could be catalyzed by ptaB containing a beta-lactamase domain. The ptaB protein might hydrolyze the thioester bond between the ACP of ptaA and the intermediate to release atrochrysone carboxylic acid, which is spontaneously dehydrated to form endocrocin anthrone. Endocrocin anthrone is then converted to endocrocin, catalyzed by the anthrone oxygenase ptaC. Spontaneous decarboxylation of endocrocin occurs to generate emodin. An O-methyltransferase (ptaH or ptaI) could methylate emodin to form physcion. PtaJ could then catalyze the oxidative cleavage of physcion, and rotation of the intermediate could then afford desmethylisosulochrin. PtaF, a putative NADH-dependent oxidoreductase, might also participate in the oxidative cleavage step. Desmethylisosulochrin is then transformed by another O-methyltransferase (ptaH or ptaI) to form isosulochrin. Chlorination of isosulochrin by ptaM in the cyclohexadienone B ring then produces chloroisosulochrin. PtaE is responsible for the oxidative coupling reactions of both benzophenones isosulochrin and chloroisosulochrin to RES-1214-1 and pestheic acid respectively, regardless of chlorination. The sequence is that of Monooxygenase ptaG from Pestalotiopsis fici (strain W106-1 / CGMCC3.15140).